The primary structure comprises 490 residues: GTPase Der (490 aa).

EngA-type G domains are found at residues Pro3 to Val166 and Ile203 to Thr376. Residues Gly9–Ser16, Asp56–Ile60, Asn118–Asp121, Gly209–Ser216, Asp256–Val260, and Asn321–Asp324 each bind GTP. In terms of domain architecture, KH-like spans Arg377–Glu461.

This sequence belongs to the TRAFAC class TrmE-Era-EngA-EngB-Septin-like GTPase superfamily. EngA (Der) GTPase family. As to quaternary structure, associates with the 50S ribosomal subunit.

Its function is as follows. GTPase that plays an essential role in the late steps of ribosome biogenesis. This Salmonella enteritidis PT4 (strain P125109) protein is GTPase Der.